The chain runs to 383 residues: Teichoic acid glycerol-phosphate primase (383 aa).

This sequence belongs to the CDP-glycerol glycerophosphotransferase family.

The protein localises to the cell membrane. It carries out the reaction N-acetyl-beta-D-mannosaminyl-(1-&gt;4)-N-acetyl-alpha-D-glucosaminyl di-trans,octa-cis-undecaprenyl diphosphate + CDP-glycerol = 4-O-[(2R)-glycerylphospho]-N-acetyl-beta-D-mannosaminyl-(1-&gt;4)-N-acetyl-alpha-D-glucosaminyl di-trans,octa-cis-undecaprenyl diphosphate + CMP + H(+). Its pathway is cell wall biogenesis; poly(ribitol phosphate) teichoic acid biosynthesis. Functionally, catalyzes the addition of a single glycerol phosphate residue to the prenoldiphosphate-linked disaccharide. The chain is Teichoic acid glycerol-phosphate primase (tarB) from Bacillus spizizenii (strain ATCC 23059 / NRRL B-14472 / W23) (Bacillus subtilis subsp. spizizenii).